The primary structure comprises 367 residues: Glutamate 5-kinase (367 aa).

Lys10 serves as a coordination point for ATP. 3 residues coordinate substrate: Ser50, Asp137, and Asn149. ATP-binding positions include 169–170 (TD) and 211–217 (TGGMGTK). Residues 275-353 (AGEITVDEGA…QQIDAILGYE (79 aa)) form the PUA domain.

Belongs to the glutamate 5-kinase family.

It is found in the cytoplasm. It catalyses the reaction L-glutamate + ATP = L-glutamyl 5-phosphate + ADP. It functions in the pathway amino-acid biosynthesis; L-proline biosynthesis; L-glutamate 5-semialdehyde from L-glutamate: step 1/2. Functionally, catalyzes the transfer of a phosphate group to glutamate to form L-glutamate 5-phosphate. The protein is Glutamate 5-kinase of Enterobacter sp. (strain 638).